We begin with the raw amino-acid sequence, 143 residues long: Hemoglobin subunit alpha-1 (143 aa).

An N-acetylserine modification is found at S2. In terms of domain architecture, Globin spans 2–143; it reads SLSAKDKATV…LALALCEKYR (142 aa). Residue H60 participates in O2 binding. H89 is a heme b binding site.

This sequence belongs to the globin family. Hb 1 is a heterotetramer of two alpha-1 and two beta-1 chains. As to expression, red blood cells.

In terms of biological role, involved in oxygen transport from gills to the various peripheral tissues. The sequence is that of Hemoglobin subunit alpha-1 (hba1) from Boreogadus saida (Polar cod).